Here is a 33-residue protein sequence, read N- to C-terminus: Dermaseptin-H6 (33 aa).

A Leucine amide modification is found at Leu33.

Expressed by the skin glands.

The protein localises to the secreted. Its function is as follows. Has antimicrobial activity. The polypeptide is Dermaseptin-H6 (Pithecopus hypochondrialis (Orange-legged leaf frog)).